Consider the following 433-residue polypeptide: 5-methylthioadenosine/S-adenosylhomocysteine deaminase (433 aa).

Zn(2+)-binding residues include His67 and His69. Residues Glu96, Arg148, and His187 each contribute to the substrate site. His214 is a Zn(2+) binding site. Substrate contacts are provided by Glu217 and Asp302. Residue Asp302 participates in Zn(2+) binding.

This sequence belongs to the metallo-dependent hydrolases superfamily. MTA/SAH deaminase family. Requires Zn(2+) as cofactor.

The enzyme catalyses S-adenosyl-L-homocysteine + H2O + H(+) = S-inosyl-L-homocysteine + NH4(+). It carries out the reaction S-methyl-5'-thioadenosine + H2O + H(+) = S-methyl-5'-thioinosine + NH4(+). In terms of biological role, catalyzes the deamination of 5-methylthioadenosine and S-adenosyl-L-homocysteine into 5-methylthioinosine and S-inosyl-L-homocysteine, respectively. Is also able to deaminate adenosine. The protein is 5-methylthioadenosine/S-adenosylhomocysteine deaminase of Carboxydothermus hydrogenoformans (strain ATCC BAA-161 / DSM 6008 / Z-2901).